The primary structure comprises 313 residues: Olfactory receptor 6E1 (313 aa).

Asn-3 carries an N-linked (GlcNAc...) asparagine glycan. Transmembrane regions (helical) follow at residues Ile-25–Phe-45, Phe-64–Ile-84, Phe-96–Met-116, Leu-142–Phe-162, Leu-192–Thr-212, Thr-238–Val-258, and Lys-271–Leu-291. A disulfide bridge links Cys-95 with Cys-177.

The protein belongs to the G-protein coupled receptor 1 family.

The protein localises to the cell membrane. Functionally, odorant receptor. Activated by (-)-citronellal and to a lesser extent by (+)-citronellal. Not activated by carvone or limonene. This Mus musculus (Mouse) protein is Olfactory receptor 6E1.